A 491-amino-acid polypeptide reads, in one-letter code: Cobyric acid synthase (491 aa).

In terms of domain architecture, GATase cobBQ-type spans 253-429; that stretch reads AHRVAVVRLP…WHGSLEGDAL (177 aa). Cys334 serves as the catalytic Nucleophile. His421 is a catalytic residue.

It belongs to the CobB/CobQ family. CobQ subfamily.

The protein operates within cofactor biosynthesis; adenosylcobalamin biosynthesis. Catalyzes amidations at positions B, D, E, and G on adenosylcobyrinic A,C-diamide. NH(2) groups are provided by glutamine, and one molecule of ATP is hydrogenolyzed for each amidation. The sequence is that of Cobyric acid synthase from Mycobacterium ulcerans (strain Agy99).